A 193-amino-acid polypeptide reads, in one-letter code: ATP-dependent Clp protease proteolytic subunit (193 aa).

S98 serves as the catalytic Nucleophile. The active site involves H123.

It belongs to the peptidase S14 family. Fourteen ClpP subunits assemble into 2 heptameric rings which stack back to back to give a disk-like structure with a central cavity, resembling the structure of eukaryotic proteasomes.

The protein resides in the cytoplasm. It carries out the reaction Hydrolysis of proteins to small peptides in the presence of ATP and magnesium. alpha-casein is the usual test substrate. In the absence of ATP, only oligopeptides shorter than five residues are hydrolyzed (such as succinyl-Leu-Tyr-|-NHMec, and Leu-Tyr-Leu-|-Tyr-Trp, in which cleavage of the -Tyr-|-Leu- and -Tyr-|-Trp bonds also occurs).. Cleaves peptides in various proteins in a process that requires ATP hydrolysis. Has a chymotrypsin-like activity. Plays a major role in the degradation of misfolded proteins. The protein is ATP-dependent Clp protease proteolytic subunit of Agathobacter rectalis (strain ATCC 33656 / DSM 3377 / JCM 17463 / KCTC 5835 / VPI 0990) (Eubacterium rectale).